The following is a 574-amino-acid chain: Frizzled-7 (574 aa).

The N-terminal stretch at 1–32 (MRDPGAAAPLSSLGLCALVLALLGALSAGAGA) is a signal peptide. The Extracellular segment spans residues 33–256 (QPYHGEKGIS…EEERRFARLW (224 aa)). The FZ domain maps to 44–163 (PDHGFCQPIS…HGAGEICVGQ (120 aa)). Intrachain disulfides connect C49/C110, C57/C103, C94/C131, C120/C160, and C124/C148. A glycan (N-linked (GlcNAc...) asparagine) is linked at N63. A glycan (N-linked (GlcNAc...) asparagine) is linked at N164. The helical transmembrane segment at 257-277 (VGVWSVLCCASTLFTVLTYLV) threads the bilayer. The Cytoplasmic portion of the chain corresponds to 278–288 (DMRRFSYPERP). A helical membrane pass occupies residues 289-309 (IIFLSGCYFMVAVAHVAGFLL). The Extracellular segment spans residues 310 to 336 (EDRAVCVERFSDDGYRTVAQGTKKEGC). Residues 337–357 (TILFMVLYFFGMASSIWWVIL) traverse the membrane as a helical segment. Topologically, residues 358–379 (SLTWFLAAGMKWGHEAIEANSQ) are cytoplasmic. A helical transmembrane segment spans residues 380–400 (YFHLAAWAVPAVKTITILAMG). Residues 401–423 (QVDGDLLSGVCYVGLSSVDALRG) lie on the Extracellular side of the membrane. The chain crosses the membrane as a helical span at residues 424 to 444 (FVLAPLFVYLFIGTSFLLAGF). Topologically, residues 445–470 (VSLFRIRTIMKHDGTKTEKLEKLMVR) are cytoplasmic. Residues 471–491 (IGVFSVLYTVPATIVLACYFY) form a helical membrane-spanning segment. The Extracellular portion of the chain corresponds to 492–528 (EQAFREHWERTWLLQTCKSYAVPCPPGHFPPMSPDFT). Residues 529–549 (VFMIKYLMTMIVGITTGFWIW) traverse the membrane as a helical segment. The Cytoplasmic segment spans residues 550–574 (SGKTLQSWRRFYHRLSHSSKGETAV). A Lys-Thr-X-X-X-Trp motif, mediates interaction with the PDZ domain of Dvl family members motif is present at residues 552–557 (KTLQSW). The short motif at 572-574 (TAV) is the PDZ-binding element.

It belongs to the G-protein coupled receptor Fz/Smo family. Interacts with MAGI3. Interacts with DVL1. Interacts with CCDC88C/DAPLE; the interaction displaces DVL1 from FZD7, leading to inhibition of canonical Wnt signaling and triggering of non-canonical Wnt responses. Interacts with MYOC. Binds to SDCBP; this interaction is increased by inositol trisphosphate (IP3). Interacts with glypican GPC3. As to quaternary structure, (Microbial infection) Interacts with C.difficile toxin TcdB; frizzled receptors constitute the major host receptors for TcdB in the colonic epithelium. Ubiquitinated by ZNRF3, leading to its degradation by the proteasome. As to expression, high expression in adult skeletal muscle and fetal kidney, followed by fetal lung, adult heart, brain, and placenta. Specifically expressed in squamous cell esophageal carcinomas.

The protein localises to the cell membrane. Its subcellular location is the endosome membrane. Receptor for Wnt proteins. Most frizzled receptors are coupled to the beta-catenin canonical signaling pathway, which leads to the activation of disheveled proteins, inhibition of GSK-3 kinase, nuclear accumulation of beta-catenin and activation of Wnt target genes. A second signaling pathway involving PKC and calcium fluxes has been seen for some family members, but it is not yet clear if it represents a distinct pathway or if it can be integrated in the canonical pathway, as PKC seems to be required for Wnt-mediated inactivation of GSK-3 kinase. Both pathways seem to involve interactions with G-proteins. Activation by WNT8 induces expression of beta-catenin target genes. Following ligand activation, binds to CCDC88C/DAPLE which displaces DVL1 from FZD7 and leads to inhibition of canonical Wnt signaling, activation of G-proteins by CCDC88C and triggering of non-canonical Wnt responses. May be involved in transduction and intercellular transmission of polarity information during tissue morphogenesis and/or in differentiated tissues. Functionally, (Microbial infection) Acts as a receptor for C.difficile toxin TcdB in the colonic epithelium. The protein is Frizzled-7 (FZD7) of Homo sapiens (Human).